The following is a 140-amino-acid chain: uncharacterized protein (140 aa).

The next 2 helical transmembrane spans lie at Leu33–Phe53 and Ser59–Phe79. Positions Glu89–Asp104 are enriched in basic and acidic residues. Positions Glu89–Ser140 are disordered. Polar residues predominate over residues Phe105–Ala121.

It is found in the membrane. This is an uncharacterized protein from Schizosaccharomyces pombe (strain 972 / ATCC 24843) (Fission yeast).